Here is a 427-residue protein sequence, read N- to C-terminus: Glutamate-1-semialdehyde 2,1-aminomutase (427 aa).

N6-(pyridoxal phosphate)lysine is present on lysine 267.

The protein belongs to the class-III pyridoxal-phosphate-dependent aminotransferase family. HemL subfamily. In terms of assembly, homodimer. Pyridoxal 5'-phosphate serves as cofactor.

The protein localises to the cytoplasm. The enzyme catalyses (S)-4-amino-5-oxopentanoate = 5-aminolevulinate. It participates in porphyrin-containing compound metabolism; protoporphyrin-IX biosynthesis; 5-aminolevulinate from L-glutamyl-tRNA(Glu): step 2/2. This Acetivibrio thermocellus (strain ATCC 27405 / DSM 1237 / JCM 9322 / NBRC 103400 / NCIMB 10682 / NRRL B-4536 / VPI 7372) (Clostridium thermocellum) protein is Glutamate-1-semialdehyde 2,1-aminomutase.